Reading from the N-terminus, the 215-residue chain is Ion-translocating oxidoreductase complex subunit G (215 aa).

A helical transmembrane segment spans residues 9–29; sequence GLILSLFAIITSGLIALTYFG. T176 carries the FMN phosphoryl threonine modification.

It belongs to the RnfG family. As to quaternary structure, the complex is composed of six subunits: RnfA, RnfB, RnfC, RnfD, RnfE and RnfG. FMN serves as cofactor.

Its subcellular location is the cell inner membrane. Functionally, part of a membrane-bound complex that couples electron transfer with translocation of ions across the membrane. In Pseudoalteromonas atlantica (strain T6c / ATCC BAA-1087), this protein is Ion-translocating oxidoreductase complex subunit G.